The following is a 223-amino-acid chain: Trichome differentiation protein GL1 (223 aa).

HTH myb-type domains are found at residues 11–63 (NQEY…MNYL) and 64–118 (SPNV…SKKL). DNA-binding regions (H-T-H motif) lie at residues 39–63 (WNRI…MNYL) and 91–114 (WSLI…NTHL).

It localises to the nucleus. Functionally, regulates the production of a signal that induces hair (trichome) precursor cells on leaf primordia to differentiate. This Arabidopsis lyrata (Lyre-leaved rock-cress) protein is Trichome differentiation protein GL1 (GL1).